Reading from the N-terminus, the 431-residue chain is Hydroxylamine reductase (431 aa).

[4Fe-4S] cluster is bound by residues cysteine 5, cysteine 8, cysteine 17, and cysteine 23. Hybrid [4Fe-2O-2S] cluster is bound by residues histidine 131, glutamate 155, cysteine 199, cysteine 286, cysteine 314, cysteine 339, glutamate 373, and lysine 375. A Cysteine persulfide modification is found at cysteine 286.

It belongs to the HCP family. It depends on [4Fe-4S] cluster as a cofactor. Hybrid [4Fe-2O-2S] cluster is required as a cofactor.

Its subcellular location is the cytoplasm. The enzyme catalyses A + NH4(+) + H2O = hydroxylamine + AH2 + H(+). Functionally, catalyzes the reduction of hydroxylamine to form NH(3) and H(2)O. The polypeptide is Hydroxylamine reductase (Thermotoga maritima (strain ATCC 43589 / DSM 3109 / JCM 10099 / NBRC 100826 / MSB8)).